The sequence spans 354 residues: UDP-N-acetylglucosamine--N-acetylmuramyl-(pentapeptide) pyrophosphoryl-undecaprenol N-acetylglucosamine transferase (354 aa).

UDP-N-acetyl-alpha-D-glucosamine-binding positions include 11–13, Arg-164, Ser-194, and Gln-289; that span reads TAG.

Belongs to the glycosyltransferase 28 family. MurG subfamily.

The protein resides in the cell membrane. It carries out the reaction di-trans,octa-cis-undecaprenyl diphospho-N-acetyl-alpha-D-muramoyl-L-alanyl-D-glutamyl-meso-2,6-diaminopimeloyl-D-alanyl-D-alanine + UDP-N-acetyl-alpha-D-glucosamine = di-trans,octa-cis-undecaprenyl diphospho-[N-acetyl-alpha-D-glucosaminyl-(1-&gt;4)]-N-acetyl-alpha-D-muramoyl-L-alanyl-D-glutamyl-meso-2,6-diaminopimeloyl-D-alanyl-D-alanine + UDP + H(+). It participates in cell wall biogenesis; peptidoglycan biosynthesis. Functionally, cell wall formation. Catalyzes the transfer of a GlcNAc subunit on undecaprenyl-pyrophosphoryl-MurNAc-pentapeptide (lipid intermediate I) to form undecaprenyl-pyrophosphoryl-MurNAc-(pentapeptide)GlcNAc (lipid intermediate II). The polypeptide is UDP-N-acetylglucosamine--N-acetylmuramyl-(pentapeptide) pyrophosphoryl-undecaprenol N-acetylglucosamine transferase (Clostridium botulinum (strain Kyoto / Type A2)).